Consider the following 374-residue polypeptide: Envelope glycoprotein M (374 aa).

The Intravirion portion of the chain corresponds to Met1–Lys16. The helical transmembrane segment at Leu17–Phe37 threads the bilayer. Residues Pro38–Thr82 are Virion surface-facing. The helical transmembrane segment at Tyr83–Val103 threads the bilayer. Topologically, residues Lys104–Gln117 are intravirion. The chain crosses the membrane as a helical span at residues Trp118 to Ile138. The Virion surface segment spans residues Gln139–His149. The helical transmembrane segment at Ile150–Cys170 threads the bilayer. The Intravirion portion of the chain corresponds to Tyr171–Asn207. A helical membrane pass occupies residues Val208–Ile228. The Virion surface portion of the chain corresponds to Gly229 to Asp238. The chain crosses the membrane as a helical span at residues Ile239 to Glu259. The Intravirion portion of the chain corresponds to Phe260–Gln269. The chain crosses the membrane as a helical span at residues Phe270–Tyr290. The Virion surface portion of the chain corresponds to Asp291 to Arg301. Residues Ala302–Ala322 form a helical membrane-spanning segment. The Intravirion segment spans residues Cys323 to Gln374. The tract at residues Lys345–Gln374 is disordered. A compositionally biased stretch (acidic residues) spans Leu364–Gln374.

The protein belongs to the herpesviridae glycoprotein M family. Interacts (via N-terminus) with gN (via N-terminus). The gM-gN heterodimer forms the gCII complex.

The protein resides in the virion membrane. Its subcellular location is the host Golgi apparatus. It is found in the host trans-Golgi network. It localises to the host endosome membrane. The protein localises to the host nucleus inner membrane. Functionally, envelope glycoprotein important for virion assembly and egress. Plays a role in the correct incorporation of gH-gL into virion membrane. Directs the glycoprotein N (gN) to the host trans-Golgi network. In Connochaetes taurinus (Blue wildebeest), this protein is Envelope glycoprotein M.